A 59-amino-acid polypeptide reads, in one-letter code: MAEEILNREYEVEYEGRKYFLRPVKAWVLQPPGKPGVVVALFKLPNGKSIRKVIMRLPP.

Belongs to the Cren7 family. In terms of assembly, monomer. In terms of processing, methylated at multiple sites, to varying extents.

It localises to the chromosome. Its subcellular location is the cytoplasm. Functionally, a chromatin protein, binds double-stranded DNA without sequence specificity. Constrains negative DNA supercoils. In Pyrobaculum aerophilum (strain ATCC 51768 / DSM 7523 / JCM 9630 / CIP 104966 / NBRC 100827 / IM2), this protein is Chromatin protein Cren7.